The primary structure comprises 206 residues: Small ribosomal subunit protein uS4 (206 aa).

Positions 96 to 157 (RRLDNVVYRM…KAKKQVRIQD (62 aa)) constitute an S4 RNA-binding domain.

It belongs to the universal ribosomal protein uS4 family. Part of the 30S ribosomal subunit. Contacts protein S5. The interaction surface between S4 and S5 is involved in control of translational fidelity.

Its function is as follows. One of the primary rRNA binding proteins, it binds directly to 16S rRNA where it nucleates assembly of the body of the 30S subunit. In terms of biological role, with S5 and S12 plays an important role in translational accuracy. The sequence is that of Small ribosomal subunit protein uS4 from Thioalkalivibrio sulfidiphilus (strain HL-EbGR7).